We begin with the raw amino-acid sequence, 168 residues long: Transmembrane protein 31 (168 aa).

Basic and acidic residues predominate over residues 1-11; it reads MRLTEKSEGEQ. The disordered stretch occupies residues 1 to 63; that stretch reads MRLTEKSEGE…LPSRRTPTTS (63 aa). 2 stretches are compositionally biased toward polar residues: residues 13–22 and 35–48; these read LKPNNSNAPN and HTPA…ADTQ. Over residues 49–63 the composition is skewed to low complexity; sequence PSRCRLPSRRTPTTS. 2 helical membrane passes run 119-139 and 148-168; these read IGLP…YKFF and FFIL…LIFF.

The protein resides in the membrane. The protein is Transmembrane protein 31 (TMEM31) of Homo sapiens (Human).